Consider the following 121-residue polypeptide: Small ribosomal subunit protein bS6 (121 aa).

The segment at 99–121 (PSLMMRNVEREEARKTQQQEFAA) is disordered. Over residues 105–115 (NVEREEARKTQ) the composition is skewed to basic and acidic residues.

Belongs to the bacterial ribosomal protein bS6 family.

Binds together with bS18 to 16S ribosomal RNA. The polypeptide is Small ribosomal subunit protein bS6 (Polaromonas naphthalenivorans (strain CJ2)).